The primary structure comprises 228 residues: tRNA (guanine-N(1)-)-methyltransferase (228 aa).

S-adenosyl-L-methionine contacts are provided by residues Gly111 and Ile130–Leu135.

It belongs to the RNA methyltransferase TrmD family. As to quaternary structure, homodimer.

The protein localises to the cytoplasm. It catalyses the reaction guanosine(37) in tRNA + S-adenosyl-L-methionine = N(1)-methylguanosine(37) in tRNA + S-adenosyl-L-homocysteine + H(+). Its function is as follows. Specifically methylates guanosine-37 in various tRNAs. The polypeptide is tRNA (guanine-N(1)-)-methyltransferase (Ureaplasma urealyticum serovar 10 (strain ATCC 33699 / Western)).